Consider the following 249-residue polypeptide: Triosephosphate isomerase (249 aa).

Residue 9–11 (NWK) coordinates substrate. Catalysis depends on His-94, which acts as the Electrophile. The active-site Proton acceptor is the Glu-166. Substrate-binding positions include Gly-172, Ser-214, and 235–236 (GG).

The protein belongs to the triosephosphate isomerase family. In terms of assembly, homodimer.

It is found in the cytoplasm. It carries out the reaction D-glyceraldehyde 3-phosphate = dihydroxyacetone phosphate. It functions in the pathway carbohydrate biosynthesis; gluconeogenesis. It participates in carbohydrate degradation; glycolysis; D-glyceraldehyde 3-phosphate from glycerone phosphate: step 1/1. Involved in the gluconeogenesis. Catalyzes stereospecifically the conversion of dihydroxyacetone phosphate (DHAP) to D-glyceraldehyde-3-phosphate (G3P). The chain is Triosephosphate isomerase from Leptospira biflexa serovar Patoc (strain Patoc 1 / Ames).